A 275-amino-acid polypeptide reads, in one-letter code: Fructose-2,6-bisphosphatase TIGAR (275 aa).

The Tele-phosphohistidine intermediate role is filled by His11. Glu89 serves as the catalytic Proton donor/acceptor.

This sequence belongs to the phosphoglycerate mutase family.

The protein resides in the cytoplasm. It is found in the nucleus. The protein localises to the mitochondrion. It carries out the reaction beta-D-fructose 2,6-bisphosphate + H2O = beta-D-fructose 6-phosphate + phosphate. Fructose-bisphosphatase hydrolyzing fructose-2,6-bisphosphate as well as fructose-1,6-bisphosphate. Acts as a negative regulator of glycolysis by lowering intracellular levels of fructose-2,6-bisphosphate in a p53/TP53-dependent manner, resulting in the pentose phosphate pathway (PPP) activation and NADPH production. Contributes to the generation of reduced glutathione to cause a decrease in intracellular reactive oxygen species (ROS) content, correlating with its ability to protect cells from oxidative or metabolic stress-induced cell death. May play a role in mitophagy inhibition. The polypeptide is Fructose-2,6-bisphosphatase TIGAR (Xenopus laevis (African clawed frog)).